The primary structure comprises 292 residues: MPSLKDLKNRIGSVKSTQKITKAMQLVAAAKLKRAQEAATAARPYAERLAAVLANLAATTGQGGPKLLTGNGTDQTHLLVVMTAERGLAGGFNAYVAKLARLKIQQLQSEGKTVKVLTIGKKGREVLAREHSALFTGHVNLSDVKSNNFTDASLSVGQMLTKGFENGEFDVATLIYSQFKNVLSQVPTAQQLIPATAPEGAPVIDLGGAQYIYEPSEEALLEALLPRYINTQILSAMLESSAGEQASRMTAMDNATRNAKDLIKALNLKYNRARQAQITKELIEIISGAEAL.

Belongs to the ATPase gamma chain family. In terms of assembly, F-type ATPases have 2 components, CF(1) - the catalytic core - and CF(0) - the membrane proton channel. CF(1) has five subunits: alpha(3), beta(3), gamma(1), delta(1), epsilon(1). CF(0) has three main subunits: a, b and c.

The protein localises to the cell inner membrane. Functionally, produces ATP from ADP in the presence of a proton gradient across the membrane. The gamma chain is believed to be important in regulating ATPase activity and the flow of protons through the CF(0) complex. The protein is ATP synthase gamma chain of Hyphomonas neptunium (strain ATCC 15444).